The following is a 279-amino-acid chain: Phosphatidylglycerol--prolipoprotein diacylglyceryl transferase (279 aa).

7 consecutive transmembrane segments (helical) span residues 25-45 (WYGLMYVLALLVALYMAKFFV), 60-80 (YFIWVEIGVILGARFGYILIY), 103-123 (FVGISGMSYHGAVIGFIIATI), 133-153 (LWSLLDLCALSIPLGYFFGRI), 181-201 (PSQLYEACLEGITIFLILYFY), 209-229 (GELICVYVILYAIFRFLTEFL), and 236-256 (IGYFSFGLSLGQILSVFMLIL). Arg-152 is an a 1,2-diacyl-sn-glycero-3-phospho-(1'-sn-glycerol) binding site.

It belongs to the Lgt family.

The protein localises to the cell inner membrane. It catalyses the reaction L-cysteinyl-[prolipoprotein] + a 1,2-diacyl-sn-glycero-3-phospho-(1'-sn-glycerol) = an S-1,2-diacyl-sn-glyceryl-L-cysteinyl-[prolipoprotein] + sn-glycerol 1-phosphate + H(+). Its pathway is protein modification; lipoprotein biosynthesis (diacylglyceryl transfer). In terms of biological role, catalyzes the transfer of the diacylglyceryl group from phosphatidylglycerol to the sulfhydryl group of the N-terminal cysteine of a prolipoprotein, the first step in the formation of mature lipoproteins. This chain is Phosphatidylglycerol--prolipoprotein diacylglyceryl transferase, found in Campylobacter hominis (strain ATCC BAA-381 / DSM 21671 / CCUG 45161 / LMG 19568 / NCTC 13146 / CH001A).